We begin with the raw amino-acid sequence, 427 residues long: MAAVVLVGAQWGDEGKGKITDYLAERADVVIRYQGGSNAGHTVMVGHEEFKLHLVPSGILYPGKLCIIGNGVVLDPAVLVEELDGLAARGVDTSGLKISNRAHLILPYHKGLDAAEEEHRGAAMIGTTKRGIGPAYVDKAARTGIRVGDLLDWEEFSAKVAHNLAATNELLAKIYDRPGYDLQAILEEYAGYARRLRPLIADSVRLVNRALQEGRKVLFEGAQGTLLDLDQGTYPFVTSSYPVAGGACIGAGVGPTRIDKVIGVVKAYTTRVGSGPFPTEITGPAGDALRQQGMEFGTTTGRPRRCGWLDTVILRHAAEVNGLTGIALTKLDVLTGLDPLRICTSYRYRGTVGEDFPASLKALEECEPVYEELPGWHEDITGARSLDDLPANCRRYIRRLEELTGVPVHLIAVGPRRDQTIVLESPF.

GTP-binding positions include 12-18 and 40-42; these read GDEGKGK and GHT. Catalysis depends on Asp13, which acts as the Proton acceptor. Asp13 and Gly40 together coordinate Mg(2+). IMP contacts are provided by residues 13–16, 38–41, Thr128, Arg142, Gln223, Thr238, and Arg302; these read DEGK and NAGH. Catalysis depends on His41, which acts as the Proton donor. Substrate is bound at residue 298 to 304; sequence TTTGRPR. GTP contacts are provided by residues Arg304, 330–332, and 412–414; these read KLD and AVG.

The protein belongs to the adenylosuccinate synthetase family. Homodimer. Mg(2+) serves as cofactor.

It localises to the cytoplasm. The enzyme catalyses IMP + L-aspartate + GTP = N(6)-(1,2-dicarboxyethyl)-AMP + GDP + phosphate + 2 H(+). It functions in the pathway purine metabolism; AMP biosynthesis via de novo pathway; AMP from IMP: step 1/2. Functionally, plays an important role in the de novo pathway of purine nucleotide biosynthesis. Catalyzes the first committed step in the biosynthesis of AMP from IMP. This is Adenylosuccinate synthetase from Moorella thermoacetica (strain ATCC 39073 / JCM 9320).